Here is a 902-residue protein sequence, read N- to C-terminus: Probable polyribonucleotide nucleotidyltransferase 1, chloroplastic (902 aa).

The transit peptide at 1-66 (MLATPGALHH…RRRAAGARVR (66 aa)) directs the protein to the chloroplast. Low complexity predominate over residues 44–53 (VAASASTSRR). Residues 44-93 (VAASASTSRRGGARRRAAGARVRASVGEEAPPVVTEEASTSGGPTKFSTK) are disordered. A compositionally biased stretch (polar residues) spans 80–91 (EASTSGGPTKFS). A KH domain is found at 693-753 (PLIHVMKVKP…SSLEKSKAII (61 aa)). The S1 motif domain occupies 763-832 (GEIYRNCEIK…DKGQLRLSSR (70 aa)). Residues 833–902 (ALLPDANQES…ASQGSEMGTE (70 aa)) are disordered. The segment covering 839–850 (NQESSSKQQAGG) has biased composition (polar residues). Basic and acidic residues predominate over residues 852-862 (TREKAPQKDNL). Over residues 877–888 (EASTAENNATAS) the composition is skewed to low complexity.

It belongs to the polyribonucleotide nucleotidyltransferase family.

The protein resides in the plastid. It is found in the chloroplast. It carries out the reaction RNA(n+1) + phosphate = RNA(n) + a ribonucleoside 5'-diphosphate. Involved in the metabolism of all major classes of plastid RNAs. Required for efficient 3'-end processing of mRNAs and 3'-end maturation of rRNA transcripts, but is not sufficient to mediate their degradation. Mediates tRNA degradation. May function as a poly(A) mRNA 3'-5' degrading phosphorylase. In Oryza sativa subsp. japonica (Rice), this protein is Probable polyribonucleotide nucleotidyltransferase 1, chloroplastic (PNP1).